The chain runs to 86 residues: Putative regulatory protein OB1501 (86 aa).

It belongs to the RemA family.

In Oceanobacillus iheyensis (strain DSM 14371 / CIP 107618 / JCM 11309 / KCTC 3954 / HTE831), this protein is Putative regulatory protein OB1501.